We begin with the raw amino-acid sequence, 138 residues long: Basic phospholipase A2 BP-I (138 aa).

The first 16 residues, 1–16 (MRTLWIMAVLLLGVDG), serve as a signal peptide directing secretion. 7 disulfides stabilise this stretch: cysteine 42–cysteine 132, cysteine 44–cysteine 60, cysteine 59–cysteine 112, cysteine 65–cysteine 138, cysteine 66–cysteine 105, cysteine 73–cysteine 98, and cysteine 91–cysteine 103. Residues glycine 45 and glycine 47 each contribute to the Ca(2+) site. Histidine 63 is an active-site residue. Residue aspartate 106 is part of the active site.

The protein belongs to the phospholipase A2 family. Group II subfamily. K49 sub-subfamily. Ca(2+) is required as a cofactor. In terms of tissue distribution, expressed by the venom gland.

It is found in the secreted. The enzyme catalyses a 1,2-diacyl-sn-glycero-3-phosphocholine + H2O = a 1-acyl-sn-glycero-3-phosphocholine + a fatty acid + H(+). Snake venom phospholipase A2 (PLA2) that has strong myotoxic activity with a low phospholipase A2 activity. PLA2 catalyzes the calcium-dependent hydrolysis of the 2-acyl groups in 3-sn-phosphoglycerides. This chain is Basic phospholipase A2 BP-I, found in Protobothrops flavoviridis (Habu).